Consider the following 130-residue polypeptide: Small ribosomal subunit protein uS8 (130 aa).

It belongs to the universal ribosomal protein uS8 family. As to quaternary structure, part of the 30S ribosomal subunit. Contacts proteins S5 and S12.

Functionally, one of the primary rRNA binding proteins, it binds directly to 16S rRNA central domain where it helps coordinate assembly of the platform of the 30S subunit. The protein is Small ribosomal subunit protein uS8 of Psychromonas ingrahamii (strain DSM 17664 / CCUG 51855 / 37).